The primary structure comprises 31 residues: Cyclotide psybry B (31 aa).

The segment at residues 1-31 (GFNPCGETCWNKPTCHAPGCTCSIANICVRN) is a cross-link (cyclopeptide (Gly-Asn)). Intrachain disulfides connect C5/C20, C9/C22, and C15/C28.

Post-translationally, this is a cyclic peptide.

Functionally, probably participates in a plant defense mechanism. The sequence is that of Cyclotide psybry B from Psychotria brachyceras.